A 546-amino-acid polypeptide reads, in one-letter code: Nuclear rim protein 1 (546 aa).

Basic and acidic residues-rich tracts occupy residues 1 to 10 (MAFWRNRHES) and 25 to 35 (QNSEDIREDNN). The disordered stretch occupies residues 1–35 (MAFWRNRHESPAISQERSPSPDRFQNSEDIREDNN). A run of 2 helical transmembrane segments spans residues 155–175 (FYLL…RYLF) and 249–269 (FLTS…WMTD). 2 disordered regions span residues 405-441 (YPSR…PSQQ) and 505-546 (RQGY…SPFR). Over residues 406-441 (PSRQHSPRLSPSRYSHLQSGNTPSAPSTPLLIPSQQ) the composition is skewed to polar residues. Over residues 533–546 (SKSPFRNSSSSPFR) the composition is skewed to low complexity.

It belongs to the NUR1 family.

It is found in the nucleus membrane. Its function is as follows. Member of a perinuclear network that controls recombination at multiple loci to maintain genome stability. Required for rDNA repeat stability. This chain is Nuclear rim protein 1 (NUR1), found in Kluyveromyces lactis (strain ATCC 8585 / CBS 2359 / DSM 70799 / NBRC 1267 / NRRL Y-1140 / WM37) (Yeast).